Reading from the N-terminus, the 318-residue chain is Ankyrin repeat and SOCS box protein 7 (318 aa).

ANK repeat units follow at residues 13–42 (QEEL…SPNG), 46–75 (NGWT…DPTV), 80–109 (GGFT…RSDI), 116–145 (DGWT…EVDP), 149–178 (KGTT…NIDI), 180–208 (NGFL…DTNL), and 213–242 (DGQT…DTNT). One can recognise an SOCS box domain in the interval 265–318 (LDFLQEVTRQPRNLQDLCRIKIRQCIGLQNLKLLDELPIAKVMKDYLKHKFDDI).

It belongs to the ankyrin SOCS box (ASB) family. As to quaternary structure, interacts with CUL5. Interacts with RNF7. Interacts with PSRC1.

The protein operates within protein modification; protein ubiquitination. In terms of biological role, probable substrate-recognition component of a SCF-like ECS (Elongin-Cullin-SOCS-box protein) E3 ubiquitin-protein ligase complex which mediates the ubiquitination and subsequent proteasomal degradation of target proteins. Plays a role in spindle dynamics and genome integrity by targeting the mitotic progression protein PSRC1 for proteasomal degradation in a cell cycle-dependent manner. Also participates in meiosis by mediating the proper attachment between kinetochores and microtubules. This Homo sapiens (Human) protein is Ankyrin repeat and SOCS box protein 7 (ASB7).